Consider the following 65-residue polypeptide: Large ribosomal subunit protein bL35 (65 aa).

It belongs to the bacterial ribosomal protein bL35 family.

In Thermoanaerobacter sp. (strain X514), this protein is Large ribosomal subunit protein bL35.